Reading from the N-terminus, the 130-residue chain is ATP synthase epsilon chain, chloroplastic (130 aa).

This sequence belongs to the ATPase epsilon chain family. In terms of assembly, F-type ATPases have 2 components, CF(1) - the catalytic core - and CF(0) - the membrane proton channel. CF(1) has five subunits: alpha(3), beta(3), gamma(1), delta(1), epsilon(1). CF(0) has three main subunits: a, b and c.

It is found in the plastid. The protein resides in the chloroplast thylakoid membrane. In terms of biological role, produces ATP from ADP in the presence of a proton gradient across the membrane. The sequence is that of ATP synthase epsilon chain, chloroplastic from Emiliania huxleyi (Coccolithophore).